A 504-amino-acid chain; its full sequence is Cobyric acid synthase (504 aa).

Positions 251 to 448 constitute a GATase cobBQ-type domain; the sequence is DITIAIVQLP…LHGLFDSDAF (198 aa). The Nucleophile role is filled by Cys332. The active site involves His440.

The protein belongs to the CobB/CobQ family. CobQ subfamily.

It participates in cofactor biosynthesis; adenosylcobalamin biosynthesis. In terms of biological role, catalyzes amidations at positions B, D, E, and G on adenosylcobyrinic A,C-diamide. NH(2) groups are provided by glutamine, and one molecule of ATP is hydrogenolyzed for each amidation. The polypeptide is Cobyric acid synthase (Salmonella gallinarum (strain 287/91 / NCTC 13346)).